Here is a 277-residue protein sequence, read N- to C-terminus: Thiazole synthase (277 aa).

Lys-118 acts as the Schiff-base intermediate with DXP in catalysis. Residues Gly-179, 205–206, and 227–228 contribute to the 1-deoxy-D-xylulose 5-phosphate site; these read AG and NT.

It belongs to the ThiG family. In terms of assembly, homotetramer. Forms heterodimers with either ThiH or ThiS.

The protein localises to the plastid. It is found in the chloroplast. The catalysed reaction is [ThiS sulfur-carrier protein]-C-terminal-Gly-aminoethanethioate + 2-iminoacetate + 1-deoxy-D-xylulose 5-phosphate = [ThiS sulfur-carrier protein]-C-terminal Gly-Gly + 2-[(2R,5Z)-2-carboxy-4-methylthiazol-5(2H)-ylidene]ethyl phosphate + 2 H2O + H(+). The protein operates within cofactor biosynthesis; thiamine diphosphate biosynthesis. In terms of biological role, catalyzes the rearrangement of 1-deoxy-D-xylulose 5-phosphate (DXP) to produce the thiazole phosphate moiety of thiamine. Sulfur is provided by the thiocarboxylate moiety of the carrier protein ThiS. In vitro, sulfur can be provided by H(2)S. This is Thiazole synthase from Emiliania huxleyi (Coccolithophore).